The following is a 299-amino-acid chain: Coenzyme PQQ synthesis protein B (299 aa).

The protein belongs to the PqqB family.

It functions in the pathway cofactor biosynthesis; pyrroloquinoline quinone biosynthesis. May be involved in the transport of PQQ or its precursor to the periplasm. The sequence is that of Coenzyme PQQ synthesis protein B from Methylorubrum extorquens (strain ATCC 14718 / DSM 1338 / JCM 2805 / NCIMB 9133 / AM1) (Methylobacterium extorquens).